A 666-amino-acid chain; its full sequence is DEAD-box ATP-dependent RNA helicase 30 (666 aa).

The tract at residues 53-102 (PDPNLPRRLPFPSSSSTPTAAAPPDSGEPSRARARTETYRTGDMNPYDLR) is disordered. Low complexity predominate over residues 64 to 76 (PSSSSTPTAAAPP). Over residues 80-92 (EPSRARARTETYR) the composition is skewed to basic and acidic residues. Residues 251 to 279 (RYFQEANFPDYCMQAIAKSGFVEPTPIQS) carry the Q motif motif. The Helicase ATP-binding domain maps to 282–457 (WPMALKGRDM…RQFLQNPYKV (176 aa)). Position 295-302 (295-302 (AQTGSGKT)) interacts with ATP. The DEAD box signature appears at 405–408 (DEAD). The 146-residue stretch at 485–630 (RLSKLLSDLM…VVNPALESMA (146 aa)) folds into the Helicase C-terminal domain. A disordered region spans residues 632-666 (SASSMGGGNFRSRGRGGFGNRSGSNSIPIRGRRPY). A compositionally biased stretch (gly residues) spans 636-651 (MGGGNFRSRGRGGFGN).

Belongs to the DEAD box helicase family. DDX5/DBP2 subfamily.

The protein resides in the nucleus. The enzyme catalyses ATP + H2O = ADP + phosphate + H(+). Functionally, ATP-dependent RNA helicase involved nonsense-mediated mRNA decay and ribosome biogenesis through rRNA processing. In Oryza sativa subsp. japonica (Rice), this protein is DEAD-box ATP-dependent RNA helicase 30.